The primary structure comprises 537 residues: Phosphoenolpyruvate carboxykinase (ATP) (537 aa).

Substrate contacts are provided by R61, Y195, and K201. ATP contacts are provided by residues K201, H220, and 236–244 (GLSGTGKTT). Positions 201 and 220 each coordinate Mn(2+). Mn(2+) is bound at residue D257. E285 serves as a coordination point for ATP. The segment covering 312–321 (DFNDGSKTEN) has biased composition (basic and acidic residues). The segment at 312–339 (DFNDGSKTENTRSAYPLESIPNASPTGR) is disordered. R323 provides a ligand contact to substrate. R323 and T448 together coordinate ATP.

It belongs to the phosphoenolpyruvate carboxykinase (ATP) family. Mn(2+) is required as a cofactor.

Its subcellular location is the cytoplasm. It catalyses the reaction oxaloacetate + ATP = phosphoenolpyruvate + ADP + CO2. It functions in the pathway carbohydrate biosynthesis; gluconeogenesis. Involved in the gluconeogenesis. Catalyzes the conversion of oxaloacetate (OAA) to phosphoenolpyruvate (PEP) through direct phosphoryl transfer between the nucleoside triphosphate and OAA. In Rhodopseudomonas palustris (strain BisB18), this protein is Phosphoenolpyruvate carboxykinase (ATP).